Reading from the N-terminus, the 651-residue chain is E3 SUMO-protein ligase PIAS1 (651 aa).

Ala2 is modified (N-acetylalanine). Residues 2–200 are required for interaction with MSX1; sequence ADSAELKQMV…KCDFTVQVQL (199 aa). An SAP domain is found at 11 to 45; sequence VMSLRVSELQVLLGYAGRNKHGRKHELLTKALHLL. The short motif at 19-23 is the LXXLL motif element; that stretch reads LQVLL. Residues Lys40 and Lys46 each participate in a glycyl lysine isopeptide (Lys-Gly) (interchain with G-Cter in SUMO2) cross-link. Positions 56–64 match the Nuclear localization signal motif; that stretch reads KIKELYRRR. In terms of domain architecture, PINIT spans 124 to 288; sequence HLTSALHPVH…SMAVYLVKQL (165 aa). Glycyl lysine isopeptide (Lys-Gly) (interchain with G-Cter in SUMO2) cross-links involve residues Lys137 and Lys238. The SP-RING-type zinc finger occupies 320–405; it reads PDSEIATTSL…LKYCTDCDEI (86 aa). 4 residues coordinate Zn(2+): Cys351, His353, Cys374, and Cys377. The short motif at 368 to 380 is the Nuclear localization signal element; that stretch reads KKPTWVCPVCDKK. Lys453 is covalently cross-linked (Glycyl lysine isopeptide (Lys-Gly) (interchain with G-Cter in SUMO2)). Residues 462 to 473 are SUMO1-binding; it reads LTIDSSSDEEEE. The interval 465–511 is disordered; the sequence is DSSSDEEEEEPSAKRTCPSLSPTSPLNNKGILSLPHQASPVSRTPSL. Phosphoserine is present on residues Ser467, Ser468, Ser483, and Ser485. Residues 482–491 are compositionally biased toward polar residues; the sequence is PSLSPTSPLN. Position 487 is a phosphothreonine (Thr487). Ser488 bears the Phosphoserine mark. Lys493 is covalently cross-linked (Glycyl lysine isopeptide (Lys-Gly) (interchain with G-Cter in SUMO2)). Ser503, Ser510, and Ser522 each carry phosphoserine. 2 consecutive repeat copies span residues 520 to 523 and 557 to 560. Residues 520 to 615 form a 4 X 4 AA repeats of N-T-S-L region; that stretch reads NTSLIQDYRH…GSSSGSNSSL (96 aa). The 3; approximate repeat unit spans residues 598-601; it reads STSL. A compositionally biased stretch (low complexity) spans 599-621; sequence TSLPTTNGSSSGSNSSLVSSNSL. The segment at 599–632 is disordered; that stretch reads TSLPTTNGSSSGSNSSLVSSNSLRESHSHTVTNR. The stretch at 612 to 615 is one 4; approximate repeat; that stretch reads NSSL.

It belongs to the PIAS family. In terms of assembly, interacts with NCOA2 and AR. Interacts with NR2C1; the interaction promotes its sumoylation. Interacts with DDX21, CSRP2, AXIN1, JUN, UBE2I, SUMO1, SATB2, PLAG1, TP53 and STAT1 (dimer), following IFNA1-stimulation. Interacts with SP3 (preferentially when SUMO-modified). Interacts with KLF8; the interaction results in SUMO ligation and repression of KLF8 transcriptional activity and of its cell cycle progression into G(1) phase. Interacts with CHUK/IKKA; this interaction induces PIAS1 phosphorylation. Interacts with PTK2/FAK1; the interaction promotes its sumoylation. Interacts with DDX5. Interacts with PML. Interacts with MTA1. Interacts with SUMO1P1/SUMO5. Interacts with PRDM1/Blimp-1. Interacts (via N-terminus) with MSX1 (via C-terminus); the interaction is required for the localization of both proteins to the nuclear periphery and specific binding of MSX1 to the core enhancer region in target gene promoters. (Microbial infection) Interacts with ebolavirus VP35; this interaction mediates the sumoylation of IRF7 and contributes to the viral inhibition of IFN-type I production. Sumoylated. In terms of tissue distribution, expressed in numerous tissues with highest level in testis.

The protein localises to the nucleus. It localises to the nucleus speckle. It is found in the PML body. The protein resides in the cytoplasm. Its subcellular location is the cytoskeleton. It participates in protein modification; protein sumoylation. Its function is as follows. Functions as an E3-type small ubiquitin-like modifier (SUMO) ligase, stabilizing the interaction between UBE2I and the substrate, and as a SUMO-tethering factor. Catalyzes sumoylation of various proteins, such as CEBPB, MRE11, MTA1, PTK2 and PML. Plays a crucial role as a transcriptional coregulation in various cellular pathways, including the STAT pathway, the p53 pathway and the steroid hormone signaling pathway. In vitro, binds A/T-rich DNA. The effects of this transcriptional coregulation, transactivation or silencing, may vary depending upon the biological context. Mediates sumoylation of MRE11, stabilizing MRE11 on chromatin during end resection. Sumoylates PML (at 'Lys-65' and 'Lys-160') and PML-RAR and promotes their ubiquitin-mediated degradation. PIAS1-mediated sumoylation of PML promotes its interaction with CSNK2A1/CK2 which in turn promotes PML phosphorylation and degradation. Enhances the sumoylation of MTA1 and may participate in its paralog-selective sumoylation. Plays a dynamic role in adipogenesis by promoting the SUMOylation and degradation of CEBPB. Mediates the nuclear mobility and localization of MSX1 to the nuclear periphery, whereby MSX1 is brought into the proximity of target myoblast differentiation factor genes. Also required for the binding of MSX1 to the core enhancer region in target gene promoter regions, independent of its sumoylation activity. Capable of binding to the core enhancer region TAAT box in the MYOD1 gene promoter. (Microbial infection) Restricts Epstein-Barr virus (EBV) lytic replication by acting as an inhibitor for transcription factors involved in lytic gene expression. The virus can use apoptotic caspases to antagonize PIAS1-mediated restriction and express its lytic genes. This Homo sapiens (Human) protein is E3 SUMO-protein ligase PIAS1 (PIAS1).